The chain runs to 332 residues: Ornithine carbamoyltransferase 1, catabolic (332 aa).

Carbamoyl phosphate is bound by residues 56–59 (STRT), Q83, R107, and 134–137 (HPTQ). L-ornithine contacts are provided by residues N167, D231, and 235–236 (SM). Residues 273 to 274 (CL) and R318 contribute to the carbamoyl phosphate site.

The protein belongs to the aspartate/ornithine carbamoyltransferase superfamily. OTCase family.

The protein localises to the cytoplasm. The enzyme catalyses carbamoyl phosphate + L-ornithine = L-citrulline + phosphate + H(+). It participates in amino-acid degradation; L-arginine degradation via ADI pathway; carbamoyl phosphate from L-arginine: step 2/2. Its function is as follows. Reversibly catalyzes the transfer of the carbamoyl group from carbamoyl phosphate (CP) to the N(epsilon) atom of ornithine (ORN) to produce L-citrulline. This Streptococcus agalactiae serotype III (strain NEM316) protein is Ornithine carbamoyltransferase 1, catabolic (arcB1).